Reading from the N-terminus, the 335-residue chain is 34 kDa spicule matrix protein (335 aa).

The signal sequence occupies residues 1–17; sequence MKGLLLILASLVAIATG. The region spanning 29–194 is the C-type lectin domain; the sequence is SGASCYRYFN…ATAMRAFVCE (166 aa). A disulfide bridge connects residues Cys-50 and Cys-193. Residues 199–335 are disordered; that stretch reads QNIPPGQQPG…QEAETDVTGS (137 aa). Residues 207 to 310 show a composition bias toward gly residues; the sequence is PGFGGQQPGF…GGPQRPGMGG (104 aa). The segment covering 311-323 has biased composition (low complexity); that stretch reads QPNSPNPRFNRPR.

It belongs to the SM50 family. As to expression, embryo spicule.

It is found in the secreted. Major matrix protein of the sea urchin embryo spicule which directs crystal growth in certain orientations and inhibit growth in others. This Lytechinus pictus (Painted sea urchin) protein is 34 kDa spicule matrix protein.